The following is a 278-amino-acid chain: ADP-dependent (S)-NAD(P)H-hydrate dehydratase (278 aa).

In terms of domain architecture, YjeF C-terminal spans aspartate 4–leucine 276. Positions 39, 102, and 152 each coordinate (6S)-NADPHX. Glycine 216 is an AMP binding site. Aspartate 217 serves as a coordination point for (6S)-NADPHX.

The protein belongs to the NnrD/CARKD family. In terms of assembly, homotetramer. It depends on Mg(2+) as a cofactor.

It catalyses the reaction (6S)-NADHX + ADP = AMP + phosphate + NADH + H(+). It carries out the reaction (6S)-NADPHX + ADP = AMP + phosphate + NADPH + H(+). In terms of biological role, catalyzes the dehydration of the S-form of NAD(P)HX at the expense of ADP, which is converted to AMP. Together with NAD(P)HX epimerase, which catalyzes the epimerization of the S- and R-forms, the enzyme allows the repair of both epimers of NAD(P)HX, a damaged form of NAD(P)H that is a result of enzymatic or heat-dependent hydration. The polypeptide is ADP-dependent (S)-NAD(P)H-hydrate dehydratase (Streptococcus thermophilus).